The sequence spans 357 residues: Protein RecA (357 aa).

78-85 (GPESSGKT) lines the ATP pocket.

The protein belongs to the RecA family.

Its subcellular location is the cytoplasm. Can catalyze the hydrolysis of ATP in the presence of single-stranded DNA, the ATP-dependent uptake of single-stranded DNA by duplex DNA, and the ATP-dependent hybridization of homologous single-stranded DNAs. It interacts with LexA causing its activation and leading to its autocatalytic cleavage. The chain is Protein RecA from Cereibacter sphaeroides (strain ATCC 17029 / ATH 2.4.9) (Rhodobacter sphaeroides).